Reading from the N-terminus, the 453-residue chain is Protein ECM18 (453 aa).

One can recognise an AB hydrolase-1 domain in the interval 130 to 435 (LLIHGYAASS…SGHNLFLDNP (306 aa)). Residues 428-433 (HNLFLD) carry the HXXXXD motif motif.

The protein belongs to the peptidase S33 family. ABHD4/ABHD5 subfamily.

Its subcellular location is the mitochondrion. Its function is as follows. May be involved in cell wall organization and biogenesis. This Saccharomyces cerevisiae (strain ATCC 204508 / S288c) (Baker's yeast) protein is Protein ECM18 (ECM18).